A 290-amino-acid polypeptide reads, in one-letter code: Proteasome subunit beta (290 aa).

A propeptide spans 1–58 (MTTSGGLTGPGAFGRLPQPFHQPGITSFVEFLALQAPDLLPGRLQMPAGGQPPEVPHG) (removed in mature form; by autocatalysis). T59 (nucleophile) is an active-site residue.

Belongs to the peptidase T1B family. As to quaternary structure, the 20S proteasome core is composed of 14 alpha and 14 beta subunits that assemble into four stacked heptameric rings, resulting in a barrel-shaped structure. The two inner rings, each composed of seven catalytic beta subunits, are sandwiched by two outer rings, each composed of seven alpha subunits. The catalytic chamber with the active sites is on the inside of the barrel. Has a gated structure, the ends of the cylinder being occluded by the N-termini of the alpha-subunits. Is capped by the proteasome-associated ATPase, ARC.

The protein localises to the cytoplasm. It catalyses the reaction Cleavage of peptide bonds with very broad specificity.. The protein operates within protein degradation; proteasomal Pup-dependent pathway. With respect to regulation, the formation of the proteasomal ATPase ARC-20S proteasome complex, likely via the docking of the C-termini of ARC into the intersubunit pockets in the alpha-rings, may trigger opening of the gate for substrate entry. Interconversion between the open-gate and close-gate conformations leads to a dynamic regulation of the 20S proteasome proteolysis activity. In terms of biological role, component of the proteasome core, a large protease complex with broad specificity involved in protein degradation. The sequence is that of Proteasome subunit beta from Acidothermus cellulolyticus (strain ATCC 43068 / DSM 8971 / 11B).